Consider the following 748-residue polypeptide: Polyribonucleotide nucleotidyltransferase (748 aa).

Residues Asp484 and Asp490 each contribute to the Mg(2+) site. The KH domain maps to 551–610; the sequence is PRIETMSVPKDKIRDVIGTGGKVIREIVATTGAKVDIEDDGTVRLSSSDPANIEAAREWI. The S1 motif domain maps to 620–688; that stretch reads GKIYNGKVVN…NRGKVRLSMR (69 aa). Residues 693–748 are disordered; sequence ETGAELDDNRPPRENAERRGGERPRRDRGPRRESGDRPARRDMEPEFAPAFLRKDS. Positions 699 to 736 are enriched in basic and acidic residues; the sequence is DDNRPPRENAERRGGERPRRDRGPRRESGDRPARRDME.

It belongs to the polyribonucleotide nucleotidyltransferase family. Requires Mg(2+) as cofactor.

It is found in the cytoplasm. The catalysed reaction is RNA(n+1) + phosphate = RNA(n) + a ribonucleoside 5'-diphosphate. Functionally, involved in mRNA degradation. Catalyzes the phosphorolysis of single-stranded polyribonucleotides processively in the 3'- to 5'-direction. This is Polyribonucleotide nucleotidyltransferase from Zymomonas mobilis subsp. mobilis (strain ATCC 31821 / ZM4 / CP4).